Reading from the N-terminus, the 61-residue chain is Adipokinetic prohormone type 2 (61 aa).

An N-terminal signal peptide occupies residues 1 to 22 (MRQGCALTLMLLVVVCAALSAA). Residue Gln23 is modified to Pyrrolidone carboxylic acid. The residue at position 30 (Trp30) is a Tryptophan amide.

It belongs to the AKH/HRTH/RPCH family. Adipokinetic hormone precursor-related peptide (APRP) can form three type of disulfide-bond dimers: p1 (alpha-alpha), p2 (alpha-beta), and p3 (beta-beta).

It localises to the secreted. Functionally, this hormone, released from cells in the corpora cardiaca, causes release of diglycerides from the fat body and stimulation of muscles to use these diglycerides as an energy source during energy-demanding processes. This Schistocerca nitens (Vagrant locust) protein is Adipokinetic prohormone type 2.